We begin with the raw amino-acid sequence, 721 residues long: Homeobox-leucine zipper protein HDG2 (721 aa).

The interval 17 to 70 (NNHNYNHEDNNNEGFLRDDEFDSPNTKSGSENQEGGSGNDQDPLHPNKKKRYHR) is disordered. Residues 21 to 34 (YNHEDNNNEGFLRD) show a composition bias toward basic and acidic residues. Positions 64-123 (KKKRYHRHTQLQIQEMEAFFKECPHPDDKQRKQLSRELNLEPLQVKFWFQNKRTQMKNHH) form a DNA-binding region, homeobox. Residues 120–194 (KNHHERHENS…DRISAIAAKY (75 aa)) are a coiled coil. The START domain maps to 242 to 468 (TESDKPVIID…LDRQCERLAS (227 aa)).

The protein belongs to the HD-ZIP homeobox family. Class IV subfamily. In terms of assembly, interacts with AIL7/PLT7, ANT, BBM and AIL1. As to expression, expressed in hairless cell files of the hypocotyl epidermis. Expressed in shoot apical meristem (SAM) with higher levels in L1 cells and the epidermal layer of young leaves. Expressed in primary root tips, in the L1 of apical inflorescence meristems, early flower primordia, carpel epidermis, ovule primordia, nucellus, chalaze and seed coat.

Its subcellular location is the nucleus. Its function is as follows. Probable transcription factor. Involved, together with PDF2, in the regulation of flower organs development by promoting the expression of APETALA 3 (AP3) in the epidermis and internal cell layers of developing flowers. This Arabidopsis thaliana (Mouse-ear cress) protein is Homeobox-leucine zipper protein HDG2.